Consider the following 377-residue polypeptide: MLAGLRRRGSMTTPPGPEIPPPHQGGFYSAGHHPQRPWPETPPPKTRGGVKWMLGAVALLAVVGVTVAVTLAVTGKDKRDAIPPGSGVSGSPTASDIASADDSGPVSVITEDPTCAAQGPILETFAAQQSQLWVERDPALGRESWSPELRADYEKVGKAMRTAADQVAQLAKITPHRAMRELYEQFIAYARAYADNIPNYTPPTDNLARVAVTAADAISYICAAVSYGSAAARAPLVENRPAPTNVAPLGNPSEPERFLTAPNPVCGEWSSVLNAFQTDTTEWLKTDPDISSSQWSIEQKQINENVIPIMKRFANQLYLLGKDSGNPTFRDIADLSVQYRLAYVAAIPTYTPADKYLANASIRLATMANVACRAAAD.

Positions 1–46 are disordered; that stretch reads MLAGLRRRGSMTTPPGPEIPPPHQGGFYSAGHHPQRPWPETPPPKT. Pro residues-rich tracts occupy residues 14–23 and 36–45; these read PPGPEIPPPH and RPWPETPPPK. The helical transmembrane segment at 53–73 threads the bilayer; the sequence is MLGAVALLAVVGVTVAVTLAV. The interval 77 to 107 is disordered; that stretch reads DKRDAIPPGSGVSGSPTASDIASADDSGPVS.

The protein localises to the cell inner membrane. In terms of biological role, may be involved in the ESX-1 / type VII specialized secretion system (T7SS), which exports several proteins including EsxA and EsxB. Involved in DNA conjugation in the recipient strain. This is an uncharacterized protein from Mycolicibacterium smegmatis (strain MKD8) (Mycobacterium smegmatis).